The primary structure comprises 270 residues: ATP synthase subunit a (270 aa).

5 consecutive transmembrane segments (helical) span residues Val38–Tyr58, Ile98–Val118, Asp143–Ile163, Leu208–Trp228, and Ala239–Val259.

This sequence belongs to the ATPase A chain family. As to quaternary structure, F-type ATPases have 2 components, CF(1) - the catalytic core - and CF(0) - the membrane proton channel. CF(1) has five subunits: alpha(3), beta(3), gamma(1), delta(1), epsilon(1). CF(0) has three main subunits: a(1), b(2) and c(9-12). The alpha and beta chains form an alternating ring which encloses part of the gamma chain. CF(1) is attached to CF(0) by a central stalk formed by the gamma and epsilon chains, while a peripheral stalk is formed by the delta and b chains.

Its subcellular location is the cell inner membrane. Its function is as follows. Key component of the proton channel; it plays a direct role in the translocation of protons across the membrane. The sequence is that of ATP synthase subunit a from Vibrio parahaemolyticus serotype O3:K6 (strain RIMD 2210633).